Reading from the N-terminus, the 461-residue chain is tRNA modification GTPase MnmE (461 aa).

Residues Arg-22, Glu-87, and Arg-126 each contribute to the (6S)-5-formyl-5,6,7,8-tetrahydrofolate site. Positions 223 to 382 constitute a TrmE-type G domain; it reads GLSTVILGRP…LEEAIAALFF (160 aa). Position 233 (Asn-233) interacts with K(+). Residues 233–238, 252–258, and 277–280 contribute to the GTP site; these read NVGKSS, TDIAGTT, and DTAG. Ser-237 contributes to the Mg(2+) binding site. Residues Thr-252, Ile-254, and Thr-257 each coordinate K(+). Thr-258 serves as a coordination point for Mg(2+). Lys-461 contacts (6S)-5-formyl-5,6,7,8-tetrahydrofolate.

This sequence belongs to the TRAFAC class TrmE-Era-EngA-EngB-Septin-like GTPase superfamily. TrmE GTPase family. As to quaternary structure, homodimer. Heterotetramer of two MnmE and two MnmG subunits. The cofactor is K(+).

It localises to the cytoplasm. Functionally, exhibits a very high intrinsic GTPase hydrolysis rate. Involved in the addition of a carboxymethylaminomethyl (cmnm) group at the wobble position (U34) of certain tRNAs, forming tRNA-cmnm(5)s(2)U34. This Lysinibacillus sphaericus (strain C3-41) protein is tRNA modification GTPase MnmE.